Reading from the N-terminus, the 104-residue chain is Secretoglobin family 3A member 1 (104 aa).

The first 21 residues, 1 to 21 (MKLTTTFLVLCVALLSDSGVA), serve as a signal peptide directing secretion.

It belongs to the secretoglobin family. UGRP subfamily. Homodimer; disulfide-linked. Highly expressed in lung, where it localizes to epithelial cells lining the trachea and bronchi. Expression in lung is mainly restricted to bronchi, submucosal glands of the trachea, and tracheal epithelium, with little expression in terminal bronchioles. Expressed in uterus where it localizes to epithelial cells of the uterine glands. Also detected in heart, stomach and small intestine.

The protein resides in the secreted. Secreted cytokine-like protein. Inhibits cell growth in vitro. The protein is Secretoglobin family 3A member 1 (Scgb3a1) of Mus musculus (Mouse).